We begin with the raw amino-acid sequence, 211 residues long: Small ribosomal subunit protein uS3 (211 aa).

A KH type-2 domain is found at 38-106 (LRKFIKKAFY…NIELNIIEVK (69 aa)).

It belongs to the universal ribosomal protein uS3 family. In terms of assembly, part of the 30S ribosomal subunit. Forms a tight complex with proteins S10 and S14.

Its function is as follows. Binds the lower part of the 30S subunit head. Binds mRNA in the 70S ribosome, positioning it for translation. The polypeptide is Small ribosomal subunit protein uS3 (Ehrlichia chaffeensis (strain ATCC CRL-10679 / Arkansas)).